A 172-amino-acid polypeptide reads, in one-letter code: Adenine phosphoribosyltransferase (172 aa).

The protein belongs to the purine/pyrimidine phosphoribosyltransferase family. Homodimer.

The protein resides in the cytoplasm. The catalysed reaction is AMP + diphosphate = 5-phospho-alpha-D-ribose 1-diphosphate + adenine. It functions in the pathway purine metabolism; AMP biosynthesis via salvage pathway; AMP from adenine: step 1/1. Its function is as follows. Catalyzes a salvage reaction resulting in the formation of AMP, that is energically less costly than de novo synthesis. The polypeptide is Adenine phosphoribosyltransferase (Prochlorococcus marinus (strain MIT 9215)).